A 365-amino-acid polypeptide reads, in one-letter code: Glycine oxidase (365 aa).

Residues 12–13 (VI), 32–33 (DQ), 40–41 (SS), 45–47 (GGI), and I173 contribute to the FAD site. R302 serves as a coordination point for substrate. 327 to 333 (HYRNGLV) contacts FAD.

The protein belongs to the DAO family. ThiO subfamily. As to quaternary structure, monomer. FAD is required as a cofactor.

It carries out the reaction glycine + O2 + H2O = glyoxylate + H2O2 + NH4(+). The catalysed reaction is sarcosine + O2 + H2O = methylamine + glyoxylate + H2O2. It participates in cofactor biosynthesis; thiamine diphosphate biosynthesis. Its function is as follows. Catalyzes the oxidation of glycine, leading to glyoxyl imine and hydrogen peroxide as primary products; glyoxyl imine is used for the biosynthesis of the thiazole ring of thiamine. Otherwise, glyoxyl imine is spontaneously hydrolyzed in water to produce glyoxylate and ammonia. Can also use sarcosine (N-methylglycine) as substrate, and, to a lesser extent, N-ethylglycine and D-proline. Has no activity towards other amino-acids D-Asp, D-Glu, D-Gln, D-His, D-Leu, D-Lys, D-ornithine, D-Trp, D-Val, L-Ala, L-Asp, L-Glu, L-His, L-Leu, L-Lys, L-Met and L-Pro. The polypeptide is Glycine oxidase (Pseudomonas putida (strain ATCC 47054 / DSM 6125 / CFBP 8728 / NCIMB 11950 / KT2440)).